The chain runs to 168 residues: Gastrula zinc finger protein XlCGF7.1 (168 aa).

C2H2-type zinc fingers lie at residues 6–28 (FTCT…QRTH), 34–56 (FTCT…LKCH), 62–84 (FMCT…RKIH), 90–112 (YICT…QTVH), 118–140 (FTCS…QKIH), and 146–168 (FKCN…ERIH).

This sequence belongs to the krueppel C2H2-type zinc-finger protein family.

Its subcellular location is the nucleus. May be involved in transcriptional regulation. This is Gastrula zinc finger protein XlCGF7.1 from Xenopus laevis (African clawed frog).